Here is a 177-residue protein sequence, read N- to C-terminus: MSDDVSTLLRTISWFAEPPSVLPEHIGDWLMETSSMTQRLEKYCAQLTVTLCREGFVSPQSLGEESEQLPPDERYWLREVVLYGDERPWLFGRTIVPQQTLDGTDSALTKIGNQPLGRYLFEQKSLTRDYIHTGCCEGLWARRSRLCLSGFPLLLTELFLPESPVYYTPSDEGWQVI.

Substrate contacts are provided by methionine 36, arginine 78, leucine 116, and glutamate 157.

It belongs to the UbiC family. In terms of assembly, monomer.

It localises to the cytoplasm. The catalysed reaction is chorismate = 4-hydroxybenzoate + pyruvate. The protein operates within cofactor biosynthesis; ubiquinone biosynthesis. Functionally, removes the pyruvyl group from chorismate, with concomitant aromatization of the ring, to provide 4-hydroxybenzoate (4HB) for the ubiquinone pathway. The polypeptide is Chorismate pyruvate-lyase (Pectobacterium carotovorum subsp. carotovorum (strain PC1)).